The primary structure comprises 213 residues: Guanylate kinase (213 aa).

Residues 10-189 form the Guanylate kinase-like domain; that stretch reads GLLLMVVAPS…AYADLAHIYH (180 aa). 17-24 contributes to the ATP binding site; that stretch reads APSGVGKT.

Belongs to the guanylate kinase family.

Its subcellular location is the cytoplasm. The catalysed reaction is GMP + ATP = GDP + ADP. Functionally, essential for recycling GMP and indirectly, cGMP. The sequence is that of Guanylate kinase (gmk) from Caulobacter vibrioides (strain ATCC 19089 / CIP 103742 / CB 15) (Caulobacter crescentus).